A 350-amino-acid polypeptide reads, in one-letter code: Twinfilin-1 (350 aa).

Serine 2 is subject to N-acetylserine. The 138-residue stretch at 2–139 (SHQTGIQASE…SLHGYRKYLL (138 aa)) folds into the ADF-H 1 domain. Phosphoserine is present on residues serine 143 and serine 277. One can recognise an ADF-H 2 domain in the interval 175–313 (LQGVAFPISR…TADFLYDEVH (139 aa)). Tyrosine 309 is subject to Phosphotyrosine. The disordered stretch occupies residues 316–350 (QHAHKQSFAKPKGPAGKRGIRRLIRGPAEAEATTD). Residue threonine 349 is modified to Phosphothreonine.

Belongs to the actin-binding proteins ADF family. Twinfilin subfamily. As to quaternary structure, interacts with G-actin; ADP-actin form and capping protein (CP). May also be able to interact with TWF2 and phosphoinositides, PI(4,5)P2. When bound to PI(4,5)P2, it is down-regulated. Interacts with ACTG1. Phosphorylated on serine and threonine residues.

It is found in the cytoplasm. The protein resides in the cytoskeleton. In terms of biological role, actin-binding protein involved in motile and morphological processes. Inhibits actin polymerization, likely by sequestering G-actin. By capping the barbed ends of filaments, it also regulates motility. Seems to play an important role in clathrin-mediated endocytosis and distribution of endocytic organelles. The chain is Twinfilin-1 (Twf1) from Rattus norvegicus (Rat).